A 211-amino-acid polypeptide reads, in one-letter code: Pyridoxine/pyridoxamine 5'-phosphate oxidase (211 aa).

Substrate is bound by residues 7-10 and Lys-65; that span reads RREY. FMN contacts are provided by residues 60 to 65, 75 to 76, Arg-81, Lys-82, and Gln-104; these read RIVLLK and YT. Substrate is bound by residues Tyr-122, Arg-126, and Ser-130. FMN-binding positions include 139–140 and Trp-184; that span reads QS. 190–192 contacts substrate; the sequence is RLH. Residue Arg-194 participates in FMN binding.

The protein belongs to the pyridoxamine 5'-phosphate oxidase family. In terms of assembly, homodimer. It depends on FMN as a cofactor.

The catalysed reaction is pyridoxamine 5'-phosphate + O2 + H2O = pyridoxal 5'-phosphate + H2O2 + NH4(+). It catalyses the reaction pyridoxine 5'-phosphate + O2 = pyridoxal 5'-phosphate + H2O2. The protein operates within cofactor metabolism; pyridoxal 5'-phosphate salvage; pyridoxal 5'-phosphate from pyridoxamine 5'-phosphate: step 1/1. It functions in the pathway cofactor metabolism; pyridoxal 5'-phosphate salvage; pyridoxal 5'-phosphate from pyridoxine 5'-phosphate: step 1/1. In terms of biological role, catalyzes the oxidation of either pyridoxine 5'-phosphate (PNP) or pyridoxamine 5'-phosphate (PMP) into pyridoxal 5'-phosphate (PLP). The chain is Pyridoxine/pyridoxamine 5'-phosphate oxidase from Vibrio atlanticus (strain LGP32) (Vibrio splendidus (strain Mel32)).